Here is a 131-residue protein sequence, read N- to C-terminus: Peptide methionine sulfoxide reductase MsrB (131 aa).

The region spanning 8–130 (LEEWKEMLDP…NSVCLDLVPR (123 aa)) is the MsrB domain. Zn(2+) contacts are provided by cysteine 47, cysteine 50, cysteine 96, and cysteine 99. Cysteine 119 serves as the catalytic Nucleophile.

It belongs to the MsrB Met sulfoxide reductase family. Requires Zn(2+) as cofactor.

It catalyses the reaction L-methionyl-[protein] + [thioredoxin]-disulfide + H2O = L-methionyl-(R)-S-oxide-[protein] + [thioredoxin]-dithiol. This chain is Peptide methionine sulfoxide reductase MsrB, found in Pseudomonas savastanoi pv. phaseolicola (strain 1448A / Race 6) (Pseudomonas syringae pv. phaseolicola (strain 1448A / Race 6)).